Here is a 440-residue protein sequence, read N- to C-terminus: MLAVRRLTRYTFLKRTHPVLYTRRAYKILPSRSTFLRRSLLQTQLHSKMTAHTNIKQHKHCHEDHPIRRSDSAVSIVHLKRAPFKVTVIGSGNWGTTIAKVIAENTELHSHIFEPEVRMWVFDEKIGDENLTDIINTRHQNVKYLPNIDLPHNLVADPDLLHSIKGADILVFNIPHQFLPNIVKQLQGHVAPHVRAISCLKGFELGSKGVQLLSSYVTDELGIQCGALSGANLAPEVAKEHWSETTVAYQLPKDYQGDGKDVDHKILKLLFHRPYFHVNVIDDVAGISIAGALKNVVALACGFVEGMGWGNNASAAIQRLGLGEIIKFGRMFFPESKVETYYQESAGVADLITTCSGGRNVKVATYMAKTGKSALEAEKELLNGQSAQGIITCREVHEWLQTCELTQEFPLFEAVYQIVYNNVRMEDLPEMIEELDIDDE.

Residues 1–16 (MLAVRRLTRYTFLKRT) constitute a mitochondrion transit peptide. Phosphoserine occurs at positions 70, 72, and 75. Residues 90–95 (GSGNWG), F122, and F178 contribute to the NAD(+) site. K201 is a substrate binding site. An NAD(+)-binding site is contributed by A234. The active-site Proton acceptor is the K294. Residues R359 and Q388 each coordinate NAD(+). A substrate-binding site is contributed by 359–360 (RN).

Belongs to the NAD-dependent glycerol-3-phosphate dehydrogenase family.

It is found in the cytoplasm. Its subcellular location is the mitochondrion. The enzyme catalyses sn-glycerol 3-phosphate + NAD(+) = dihydroxyacetone phosphate + NADH + H(+). Catalyzes the production of glycerol under anaerobic growth conditions. Glycerol production serves as a redox sink by consuming the excess cytosolic NADH during anaerobic metabolism. The polypeptide is Glycerol-3-phosphate dehydrogenase [NAD(+)] 2, mitochondrial (Saccharomyces cerevisiae (strain ATCC 204508 / S288c) (Baker's yeast)).